Reading from the N-terminus, the 296-residue chain is Fructose-bisphosphate aldolase class 1 (296 aa).

E175 functions as the Proton acceptor in the catalytic mechanism. The active-site Schiff-base intermediate with dihydroxyacetone-P is K212.

It belongs to the class I fructose-bisphosphate aldolase family.

The catalysed reaction is beta-D-fructose 1,6-bisphosphate = D-glyceraldehyde 3-phosphate + dihydroxyacetone phosphate. It participates in carbohydrate degradation; glycolysis; D-glyceraldehyde 3-phosphate and glycerone phosphate from D-glucose: step 4/4. The polypeptide is Fructose-bisphosphate aldolase class 1 (Staphylococcus aureus (strain MRSA252)).